The chain runs to 285 residues: Shikimate dehydrogenase (NADP(+)) (285 aa).

Residues 20-22 (SIS) and serine 67 each bind shikimate. The active-site Proton acceptor is lysine 71. Glutamate 83 serves as a coordination point for NADP(+). Asparagine 92 and aspartate 107 together coordinate shikimate. Residues 129–133 (GAGGA) and methionine 227 contribute to the NADP(+) site. Position 229 (tyrosine 229) interacts with shikimate. Glycine 250 contributes to the NADP(+) binding site.

It belongs to the shikimate dehydrogenase family. In terms of assembly, homodimer.

It catalyses the reaction shikimate + NADP(+) = 3-dehydroshikimate + NADPH + H(+). The protein operates within metabolic intermediate biosynthesis; chorismate biosynthesis; chorismate from D-erythrose 4-phosphate and phosphoenolpyruvate: step 4/7. Its function is as follows. Involved in the biosynthesis of the chorismate, which leads to the biosynthesis of aromatic amino acids. Catalyzes the reversible NADPH linked reduction of 3-dehydroshikimate (DHSA) to yield shikimate (SA). This chain is Shikimate dehydrogenase (NADP(+)), found in Streptococcus gordonii (strain Challis / ATCC 35105 / BCRC 15272 / CH1 / DL1 / V288).